The following is a 353-amino-acid chain: Ribosome biogenesis protein BRX1 homolog (353 aa).

Residues 1–50 (MAATKRKRRGGLEVQAKKPKRSSKDAGQPAKQADVAKEAEEENRDRIPGP) are disordered. Basic and acidic residues predominate over residues 34-47 (DVAKEAEEENRDRI). In terms of domain architecture, Brix spans 60-249 (ERILIFSSRG…LIKIFQGSFG (190 aa)). Lys160 is covalently cross-linked (Glycyl lysine isopeptide (Lys-Gly) (interchain with G-Cter in SUMO2)). Position 261 is a phosphoserine (Ser261). Lys276 carries the N6-acetyllysine modification. Residues Lys314 and Lys322 each participate in a glycyl lysine isopeptide (Lys-Gly) (interchain with G-Cter in SUMO2) cross-link. Over residues 334–344 (RRIYKRHRKLQ) the composition is skewed to basic residues. Positions 334–353 (RRIYKRHRKLQQKMSRGSAK) are disordered.

This sequence belongs to the BRX1 family.

The protein resides in the nucleus. Its subcellular location is the nucleolus. Required for biogenesis of the 60S ribosomal subunit. This chain is Ribosome biogenesis protein BRX1 homolog (Brix1), found in Mus musculus (Mouse).